We begin with the raw amino-acid sequence, 302 residues long: tRNA-cytidine(32) 2-sulfurtransferase (302 aa).

The PP-loop motif signature appears at 44-49 (SGGKDS). Residues Cys-119, Cys-122, and Cys-210 each contribute to the [4Fe-4S] cluster site.

Belongs to the TtcA family. Homodimer. Requires Mg(2+) as cofactor. The cofactor is [4Fe-4S] cluster.

The protein localises to the cytoplasm. It carries out the reaction cytidine(32) in tRNA + S-sulfanyl-L-cysteinyl-[cysteine desulfurase] + AH2 + ATP = 2-thiocytidine(32) in tRNA + L-cysteinyl-[cysteine desulfurase] + A + AMP + diphosphate + H(+). It functions in the pathway tRNA modification. Functionally, catalyzes the ATP-dependent 2-thiolation of cytidine in position 32 of tRNA, to form 2-thiocytidine (s(2)C32). The sulfur atoms are provided by the cysteine/cysteine desulfurase (IscS) system. The protein is tRNA-cytidine(32) 2-sulfurtransferase of Tolumonas auensis (strain DSM 9187 / NBRC 110442 / TA 4).